A 2230-amino-acid polypeptide reads, in one-letter code: DNA polymerase epsilon catalytic subunit A (2230 aa).

Polar residues predominate over residues 1-19; it reads MPTRQPSKYGNKFRSSSAS. Positions 1-24 are disordered; that stretch reads MPTRQPSKYGNKFRSSSASFKPKR. Zn(2+)-binding residues include C2101, C2104, C2136, and C2139. The CysA-type zinc finger occupies 2101–2139; it reads CNACCLIRDLDLCRDEDVLPEMGSDPNKAAPKPWRCPFC. C2170, C2173, C2185, and C2187 together coordinate [4Fe-4S] cluster. The short motif at 2170-2187 is the CysB motif element; sequence CSKCGGLKISDFMEHCSC.

It belongs to the DNA polymerase type-B family. In terms of assembly, heterotetramer. Consists of 4 subunits: pol2, dpb2, dpb3 and dpb4. [4Fe-4S] cluster serves as cofactor.

The protein localises to the nucleus. It catalyses the reaction DNA(n) + a 2'-deoxyribonucleoside 5'-triphosphate = DNA(n+1) + diphosphate. In terms of biological role, DNA polymerase II participates in chromosomal DNA replication. The sequence is that of DNA polymerase epsilon catalytic subunit A (pol2) from Aspergillus fumigatus (strain ATCC MYA-4609 / CBS 101355 / FGSC A1100 / Af293) (Neosartorya fumigata).